The following is a 237-amino-acid chain: Phosphoribosylaminoimidazole-succinocarboxamide synthase (237 aa).

It belongs to the SAICAR synthetase family.

The catalysed reaction is 5-amino-1-(5-phospho-D-ribosyl)imidazole-4-carboxylate + L-aspartate + ATP = (2S)-2-[5-amino-1-(5-phospho-beta-D-ribosyl)imidazole-4-carboxamido]succinate + ADP + phosphate + 2 H(+). It participates in purine metabolism; IMP biosynthesis via de novo pathway; 5-amino-1-(5-phospho-D-ribosyl)imidazole-4-carboxamide from 5-amino-1-(5-phospho-D-ribosyl)imidazole-4-carboxylate: step 1/2. This Alteromonas mediterranea (strain DSM 17117 / CIP 110805 / LMG 28347 / Deep ecotype) protein is Phosphoribosylaminoimidazole-succinocarboxamide synthase.